A 453-amino-acid polypeptide reads, in one-letter code: Magnesium transporter MgtE (453 aa).

The Cytoplasmic segment spans residues 1–286 (MNEGQEMEEQ…ENPLKAASKR (286 aa)). The Mg(2+) site is built by glutamate 71, aspartate 98, aspartate 102, glutamate 136, alanine 140, tyrosine 176, arginine 227, aspartate 230, alanine 233, aspartate 251, and glutamate 259. CBS domains lie at 142 to 205 (MTTE…IADI) and 206 to 262 (LNER…EAAS). The helical transmembrane segment at 287–307 (LPWLITLLFLGMSTASLISNY) threads the bilayer. Glutamate 308 is a topological domain (extracellular). A helical membrane pass occupies residues 309–329 (SLVSEASILAVFISLITGTAG). Topologically, residues 330–360 (NAGTQSLAVAVRRLAMKDEKDSNFGRLILSE) are cytoplasmic. A helical transmembrane segment spans residues 361 to 381 (VLTGLVTGAVTGLTIMIVVGV). The Extracellular portion of the chain corresponds to 382–389 (WQHNLPLG). Residues 390–410 (FVIGMAMLCAITVANLAGSLI) form a helical membrane-spanning segment. At 411–427 (PMLMDKLGFDPAVASGP) the chain is on the cytoplasmic side. Residues 428–448 (FITTLSDLTSVLIYFNIASMF) form a helical membrane-spanning segment. Aspartate 434 is a Mg(2+) binding site. The Extracellular segment spans residues 449 to 453 (MRYFV).

The protein belongs to the SLC41A transporter family. As to quaternary structure, homodimer.

Its subcellular location is the cell membrane. The enzyme catalyses Mg(2+)(in) = Mg(2+)(out). Acts as a magnesium transporter. This is Magnesium transporter MgtE from Enterococcus faecalis (strain ATCC 700802 / V583).